The sequence spans 254 residues: Translation initiation factor 2 subunit alpha (254 aa).

The 72-residue stretch at 10 to 81 folds into the S1 motif domain; sequence GDLVVVKITE…ERKNVDLSLK (72 aa).

The protein belongs to the eIF-2-alpha family. In terms of assembly, heterotrimer composed of an alpha, a beta and a gamma chain.

EIF-2 functions in the early steps of protein synthesis by forming a ternary complex with GTP and initiator tRNA. The protein is Translation initiation factor 2 subunit alpha of Thermoplasma volcanium (strain ATCC 51530 / DSM 4299 / JCM 9571 / NBRC 15438 / GSS1).